Here is a 378-residue protein sequence, read N- to C-terminus: Transmembrane 6 superfamily member 2 (378 aa).

9 consecutive transmembrane segments (helical) span residues 34 to 54, 63 to 83, 110 to 130, 140 to 160, 170 to 190, 219 to 239, 269 to 289, 291 to 311, and 332 to 352; these read LCVVLTSALVLGLLFMAVYSL, PLYAVFVVFSFTSVVDLVIAL, IFICYWDGTVHYLLYLTMAGA, LGLYWLGSFAMSLLVFLPGNI, PTFFLAILYMLVPCWAGMRIF, LTLIVYLILAAFFTVFRGLVV, MLMYLFYALPFYCLAAYALTF, GCSWLPDWALVFAGAIGQAQF, and TWATFLLSNLLFALGPHLLAL. EXPERA domains follow at residues 61 to 186 and 217 to 351; these read YDPL…CWAG and ADLT…HLLA.

The protein belongs to the TM6SF family.

The protein localises to the endoplasmic reticulum membrane. It is found in the endoplasmic reticulum-Golgi intermediate compartment membrane. Regulator of liver fat metabolism influencing triglyceride secretion and hepatic lipid droplet content. May function as sterol isomerase. The polypeptide is Transmembrane 6 superfamily member 2 (Tm6sf2) (Rattus norvegicus (Rat)).